The primary structure comprises 336 residues: Ventral anterior homeobox 1 (336 aa).

A compositionally biased stretch (basic and acidic residues) spans 1 to 34; the sequence is MFGKTDKMDVRCHSDTEAARVSKNAHKESREIKG. Disordered regions lie at residues 1-39 and 50-69; these read MFGKTDKMDVRCHSDTEAARVSKNAHKESREIKGAEGSL and AFSASGASEDCNKSKSNSSA. Positions 100-159 form a DNA-binding region, homeobox; it reads PKRTRTSFTAEQLYRLEMEFQRCQYVVGRERTELARQLNLSETQVKVWFQNRRTKQKKDQ. Residues 236 to 250 show a composition bias toward low complexity; the sequence is PGPAGAASQHPPAVG. 2 disordered regions span residues 236–267 and 316–336; these read PGPAGAASQHPPAVGGAPGPGPAGPGGLHAGA and SAFEPYSRTNNKEGAEKKALD. A compositionally biased stretch (basic and acidic residues) spans 325 to 336; that stretch reads NNKEGAEKKALD.

This sequence belongs to the EMX homeobox family.

The protein localises to the nucleus. In terms of biological role, transcription factor that may function in dorsoventral specification of the forebrain. Required for axon guidance and major tract formation in the developing forebrain. May contribute to the differentiation of the neuroretina, pigmented epithelium and optic stalk. The sequence is that of Ventral anterior homeobox 1 (Vax1) from Rattus norvegicus (Rat).